A 461-amino-acid polypeptide reads, in one-letter code: MTTDNSAPTASPWWSLPGKFLRREFLPVLTDLRLAIALLLIIALFSISGTVIEQGQSPAFYQSNYPEHPALFGFLTWKVIQVVGLDHVYRTWWFLSLLVLFGTSLTACTFTRQLPALKTAQRWKYYEEPRQFQKLALSAELDAGSVNSLSQILQNRRYKIFQEKDDILYARKGIVGRIGPIIVHIGIVTILLGSIWGAMTGFIAQEMVPSGETFQVKNIIDAGPLAAGQFPQDWSVRVNRFWIDYTPKGGIDQFYSDMSVLDNQGQEVDHKKIFVNQPLRYHGVTFYQTDWGISGVRVRLNKSPIFQLPMALLNTNGQGRIWGTWIPTKPDLSEGVSLLAKDLQGMVLIYDAQGKLVDTVRAGMSTQVNGVTLKVLDVVGSTGLQIKADPGIPIVYTGFGILMLGVVMSYFSHSQIWALQKGDRLYVGGKTNRAQVAFEQEVLDILERLNSQSATVINQQS.

3 helical membrane-spanning segments follow: residues 32–52, 91–111, and 178–198; these read LRLA…GTVI, TWWF…CTFT, and IGPI…IWGA.

The protein belongs to the Ccs1/CcsB family. In terms of assembly, may interact with CcsA.

The protein localises to the cellular thylakoid membrane. Its function is as follows. Required during biogenesis of c-type cytochromes (cytochrome c6 and cytochrome f) at the step of heme attachment. The chain is Cytochrome c biogenesis protein CcsB from Nostoc sp. (strain PCC 7120 / SAG 25.82 / UTEX 2576).